The following is a 97-amino-acid chain: Ribosomal biogenesis factor (97 aa).

Position 19 is a phosphoserine (S19). K21 carries the post-translational modification N6-acetyllysine. The residue at position 69 (S69) is a Phosphoserine.

As to quaternary structure, associates with the pre-60S ribosomal particles.

The protein localises to the nucleus. Its subcellular location is the nucleolus. In terms of biological role, trans-acting factor in ribosome biogenesis required for efficient 40S and 60S subunit production. This Mus musculus (Mouse) protein is Ribosomal biogenesis factor (Rbis).